A 350-amino-acid chain; its full sequence is tRNA uridine(34) hydroxylase (350 aa).

Residues 146 to 240 (DDPDAVFIDM…YARRARAQGL (95 aa)) form the Rhodanese domain. Residue Cys200 is the Cysteine persulfide intermediate of the active site. Positions 319 to 328 (RRRRAGRENG) are enriched in basic and acidic residues. The segment at 319–350 (RRRRAGRENGNKIFNKSRGRLNSKLSIPDPAE) is disordered.

The protein belongs to the TrhO family.

It carries out the reaction uridine(34) in tRNA + AH2 + O2 = 5-hydroxyuridine(34) in tRNA + A + H2O. In terms of biological role, catalyzes oxygen-dependent 5-hydroxyuridine (ho5U) modification at position 34 in tRNAs. This chain is tRNA uridine(34) hydroxylase, found in Salmonella paratyphi B (strain ATCC BAA-1250 / SPB7).